Consider the following 668-residue polypeptide: UvrABC system protein B (668 aa).

Residues 31–416 form the Helicase ATP-binding domain; that stretch reads QGITDGVPAQ…RGHIIEQIIR (386 aa). 44-51 is an ATP binding site; it reads GTTGSGKT. Positions 97-120 match the Beta-hairpin motif; the sequence is YYDYYQPEAYIARSDTYIEKSLLI. The region spanning 433–596 is the Helicase C-terminal domain; it reads QIDDLLEEIR…ITPQPIIKPI (164 aa). The 36-residue stretch at 621–656 folds into the UVR domain; sequence EASIKTYEEAMYQAAQEFQFDEAVKYRDLMNAAKKQ.

It belongs to the UvrB family. Forms a heterotetramer with UvrA during the search for lesions. Interacts with UvrC in an incision complex.

The protein localises to the cytoplasm. In terms of biological role, the UvrABC repair system catalyzes the recognition and processing of DNA lesions. A damage recognition complex composed of 2 UvrA and 2 UvrB subunits scans DNA for abnormalities. Upon binding of the UvrA(2)B(2) complex to a putative damaged site, the DNA wraps around one UvrB monomer. DNA wrap is dependent on ATP binding by UvrB and probably causes local melting of the DNA helix, facilitating insertion of UvrB beta-hairpin between the DNA strands. Then UvrB probes one DNA strand for the presence of a lesion. If a lesion is found the UvrA subunits dissociate and the UvrB-DNA preincision complex is formed. This complex is subsequently bound by UvrC and the second UvrB is released. If no lesion is found, the DNA wraps around the other UvrB subunit that will check the other stand for damage. This is UvrABC system protein B from Chlamydia trachomatis serovar A (strain ATCC VR-571B / DSM 19440 / HAR-13).